Reading from the N-terminus, the 149-residue chain is Putative pre-16S rRNA nuclease (149 aa).

Belongs to the YqgF nuclease family.

The protein resides in the cytoplasm. Its function is as follows. Could be a nuclease involved in processing of the 5'-end of pre-16S rRNA. The chain is Putative pre-16S rRNA nuclease from Burkholderia orbicola (strain MC0-3).